The primary structure comprises 263 residues: Uridylate kinase (263 aa).

29-32 (KVSG) serves as a coordination point for ATP. Glycine 71 provides a ligand contact to UMP. ATP is bound by residues glycine 72 and arginine 76. UMP-binding positions include aspartate 91 and 152-159 (TGNPFFTT). Positions 179, 180, 185, and 188 each coordinate ATP.

Belongs to the UMP kinase family. Homohexamer.

The protein localises to the cytoplasm. It catalyses the reaction UMP + ATP = UDP + ADP. It functions in the pathway pyrimidine metabolism; CTP biosynthesis via de novo pathway; UDP from UMP (UMPK route): step 1/1. Its activity is regulated as follows. Inhibited by UTP. Its function is as follows. Catalyzes the reversible phosphorylation of UMP to UDP. The sequence is that of Uridylate kinase from Maricaulis maris (strain MCS10) (Caulobacter maris).